The following is a 246-amino-acid chain: MVARLTTLLVCLVFSLATLVQRGYGDFDDFNLEDALKETSSVKQSHFSTTTRRTGTTRAPANPAERWDHMTTTTTKRPGTTRAPSNPLELDGFDLEDALDDRNDLDGPKKPSTGEGGGLSDKDLEDILGGGGYKPDKNKGGGGGYGSQDDPGSGAVTDPGTIAGLVSALAAALLGAVSGYLSYQHRKFCFSVQRGLDAAYVKGENLEAVVCEEPRVEAAMCEAPPVTDSTQHSQPTEPLAPERPRI.

Residues Met-1 to Gly-25 form the signal peptide. At Asp-26–Gly-160 the chain is on the extracellular side. The tract at residues Lys-43–Val-156 is disordered. 2 stretches are compositionally biased toward low complexity: residues Thr-49 to Arg-58 and Thr-71 to Thr-81. Positions Asp-100–Lys-109 are enriched in basic and acidic residues. A glycan (O-linked (Xyl...) (chondroitin sulfate) serine) is linked at Ser-153. A helical membrane pass occupies residues Thr-161–Leu-181. At Ser-182 to Ile-246 the chain is on the cytoplasmic side. The segment at Ala-223–Ile-246 is disordered. Residues Thr-227–Thr-236 show a composition bias toward polar residues.

This sequence belongs to the CD99 family. O-glycosylated. In terms of tissue distribution, expressed predominantly in the ventral medullary surface of the brain, moderate expression in the cerebral cortex and cerebellum. Low expression in lung and kidney. No expression in heart, stomach, intestine and skeletal muscle.

It is found in the cell membrane. It localises to the cell junction. The protein localises to the secreted. Functionally, plays a role in a late step of leukocyte extravasation helping cells to overcome the endothelial basement membrane. Acts at the same site as, but independently of, PECAM1. Homophilic adhesion molecule, but these interactions may not be required for cell aggregation. This is CD99 antigen-like protein 2 (Cd99l2) from Rattus norvegicus (Rat).